Here is a 342-residue protein sequence, read N- to C-terminus: S-adenosylmethionine:tRNA ribosyltransferase-isomerase (342 aa).

The protein belongs to the QueA family. As to quaternary structure, monomer.

It is found in the cytoplasm. It carries out the reaction 7-aminomethyl-7-carbaguanosine(34) in tRNA + S-adenosyl-L-methionine = epoxyqueuosine(34) in tRNA + adenine + L-methionine + 2 H(+). It functions in the pathway tRNA modification; tRNA-queuosine biosynthesis. Its function is as follows. Transfers and isomerizes the ribose moiety from AdoMet to the 7-aminomethyl group of 7-deazaguanine (preQ1-tRNA) to give epoxyqueuosine (oQ-tRNA). The chain is S-adenosylmethionine:tRNA ribosyltransferase-isomerase from Zymomonas mobilis subsp. mobilis (strain ATCC 31821 / ZM4 / CP4).